Reading from the N-terminus, the 625-residue chain is tRNA uridine 5-carboxymethylaminomethyl modification enzyme MnmG (625 aa).

FAD is bound by residues 9-14 (GGGHAG), valine 121, and serine 176. 270-284 (GPRYCPSIEDKIYRF) provides a ligand contact to NAD(+). Glutamine 367 contacts FAD.

The protein belongs to the MnmG family. In terms of assembly, homodimer. Heterotetramer of two MnmE and two MnmG subunits. Requires FAD as cofactor.

The protein resides in the cytoplasm. Functionally, NAD-binding protein involved in the addition of a carboxymethylaminomethyl (cmnm) group at the wobble position (U34) of certain tRNAs, forming tRNA-cmnm(5)s(2)U34. In Nitratiruptor sp. (strain SB155-2), this protein is tRNA uridine 5-carboxymethylaminomethyl modification enzyme MnmG.